We begin with the raw amino-acid sequence, 465 residues long: Cysteine--tRNA ligase (465 aa).

A Zn(2+)-binding site is contributed by Cys-29. Residues 31-41 (ITPYDEVHLGH) carry the 'HIGH' region motif. Residues Cys-212, His-237, and Glu-241 each contribute to the Zn(2+) site. The 'KMSKS' region motif lies at 269–273 (KMSKS). Lys-272 is a binding site for ATP.

The protein belongs to the class-I aminoacyl-tRNA synthetase family. In terms of assembly, monomer. Requires Zn(2+) as cofactor.

It is found in the cytoplasm. It carries out the reaction tRNA(Cys) + L-cysteine + ATP = L-cysteinyl-tRNA(Cys) + AMP + diphosphate. The polypeptide is Cysteine--tRNA ligase (Endomicrobium trichonymphae).